The sequence spans 459 residues: MAP kinase-interacting serine/threonine-protein kinase 2 (459 aa).

The interval aspartate 37–lysine 67 is disordered. The Nuclear localization signal motif lies at lysine 60–lysine 66. Phosphoserine is present on serine 74. The 285-residue stretch at glutamine 84–valine 368 folds into the Protein kinase domain. Residues leucine 90–valine 98 and lysine 113 contribute to the ATP site. Glutamate 160–methionine 162 lines the staurosporine pocket. Aspartate 205 acts as the Proton acceptor in catalysis. Glutamate 209 provides a ligand contact to staurosporine. Threonine 244 and threonine 249 each carry phosphothreonine. Residues cysteine 299, cysteine 311, and cysteine 314 each contribute to the Zn(2+) site. Residue threonine 379 is modified to Phosphothreonine. Residues serine 431 and serine 434 each carry the phosphoserine modification. The short motif at leucine 438–arginine 442 is the MAP kinase binding element. At serine 446 the chain carries Phosphoserine. Position 450 is a phosphothreonine (threonine 450).

Belongs to the protein kinase superfamily. CAMK Ser/Thr protein kinase family. As to quaternary structure, interacts with ESR2 and EIF4E in the nucleus. Monomer. Interacts with the C-terminal regions of EIF4G1 and EIF4G2; this interaction is promoted when MAPK pathways are repressed but repressed upon ERK proteins activation. Also binds to dephosphorylated MAPK3/ERK1 and MAPK1/ERK2. Interaction with phosphorylated MAPK3/ERK1 and MAPK1/ERK2 protects it from dephosphorylation and inactivation. Requires Mg(2+) as cofactor. Zn(2+) serves as cofactor. In terms of processing, dual phosphorylation of Thr-244 and Thr-249 activates the kinase. Phosphorylation of Thr-379 activates the kinase. Phosphorylated upon arsenic trioxide As(2)O(3) treatment. Phosphorylated by MAPK1/ERK2, MAPK11 and MAPK14. Dephosphorylated by PP2A. Ubiquitously expressed in all tissues examined, with high levels in skeletal muscle and low levels in brain.

The protein localises to the cytoplasm. It localises to the nucleus. Its subcellular location is the PML body. The enzyme catalyses L-seryl-[protein] + ATP = O-phospho-L-seryl-[protein] + ADP + H(+). The catalysed reaction is L-threonyl-[protein] + ATP = O-phospho-L-threonyl-[protein] + ADP + H(+). Its activity is regulated as follows. Inhibited by CGP57380 and staurosporine. Serine/threonine-protein kinase that phosphorylates SFPQ/PSF, HNRNPA1 and EIF4E. May play a role in the response to environmental stress and cytokines. Appears to regulate translation by phosphorylating EIF4E, thus increasing the affinity of this protein for the 7-methylguanosine-containing mRNA cap. Required for mediating PP2A-inhibition-induced EIF4E phosphorylation. Triggers EIF4E shuttling from cytoplasm to nucleus. Enhances the formation of EIF4F complex in pachytene spermatocytes, thus promoting mRNA translation during spermatogenesis. Displays a high basal kinase activity. Acts as a mediator of the suppressive effects of IFNgamma on hematopoiesis. Negative regulator for signals that control generation of arsenic trioxide As(2)O(3)-dependent apoptosis and anti-leukemic responses. Involved in anti-apoptotic signaling in response to serum withdrawal. The protein is MAP kinase-interacting serine/threonine-protein kinase 2 (Mknk2) of Mus musculus (Mouse).